We begin with the raw amino-acid sequence, 640 residues long: RecBCD enzyme subunit RecD (640 aa).

Residue 194-201 participates in ATP binding; it reads GGPGTGKT.

This sequence belongs to the RecD family. In terms of assembly, heterotrimer of RecB, RecC and RecD. All subunits contribute to DNA-binding.

The catalysed reaction is Couples ATP hydrolysis with the unwinding of duplex DNA at the replication fork by translocating in the 5'-3' direction. This creates two antiparallel DNA single strands (ssDNA). The leading ssDNA polymer is the template for DNA polymerase III holoenzyme which synthesizes a continuous strand.. It carries out the reaction ATP + H2O = ADP + phosphate + H(+). In terms of biological role, a helicase/nuclease that prepares dsDNA breaks (DSB) for recombinational DNA repair. Binds to DSBs and unwinds DNA via a highly rapid and processive ATP-dependent bidirectional helicase activity. Unwinds dsDNA until it encounters a Chi (crossover hotspot instigator) sequence from the 3' direction. Cuts ssDNA a few nucleotides 3' to the Chi site. The properties and activities of the enzyme are changed at Chi. The Chi-altered holoenzyme produces a long 3'-ssDNA overhang and facilitates RecA-binding to the ssDNA for homologous DNA recombination and repair. Holoenzyme degrades any linearized DNA that is unable to undergo homologous recombination. In the holoenzyme this subunit has ssDNA-dependent ATPase and 5'-3' helicase activity. When added to pre-assembled RecBC greatly stimulates nuclease activity and augments holoenzyme processivity. Negatively regulates the RecA-loading ability of RecBCD. This Haemophilus influenzae (strain ATCC 51907 / DSM 11121 / KW20 / Rd) protein is RecBCD enzyme subunit RecD.